The chain runs to 461 residues: Methylthioribose transporter (461 aa).

The next 12 helical transmembrane spans lie at 33 to 53 (LLGI…TVAA), 56 to 76 (AGPA…LAAF), 102 to 122 (LLAF…LSAV), 152 to 172 (MAGA…TAIV), 185 to 205 (VIVL…IGYV), 213 to 233 (FMPF…FAYL), 254 to 274 (VGII…SLVL), 301 to 321 (VAGI…LALL), 355 to 375 (TWLT…GTLA), 376 to 396 (HLVN…VIVL), 409 to 429 (VPFV…FMYS), and 432 to 452 (GVTW…YFLY).

This sequence belongs to the amino acid-polyamine-organocation (APC) superfamily.

It is found in the cell membrane. Involved in import of methylthioribose (MTR) into the cell. The protein is Methylthioribose transporter of Bacillus subtilis (strain 168).